The chain runs to 390 residues: MNTEQLKQAFLDVFGQEADATFFSPGRINLIGEHTDYNGGHVFPAAITLGTYGAARKRDDQVLRFYSANFEELGIIEVDLNNLVFDKADNWTNYAKGVLKFLKEAGHVIDTGMEVFVYGNIPNGSGLSSSASLELLIGIIAEELYGLELTRLDLVKIGKQTENHFIGVNSGIMDQFAIGMGADNRAIYLDTNSLEYELVPLDLGDHVIVIMNTNKRRELADSKYNERRAECEKAVEELNAVLNIQTLGELDEWTFDQYSYLIKDENRIKRARHAVLENQRTLQARKALEEGDLATFGRLVNASHVSLEHDYEVTGLELDTLAHTAWEQEGVLGARMTGAGFGGCGIAIVHKDKVEAFKENVGKTYTEVVGYAPSFYVAEIAGGSRVLSRK.

33–36 (EHTD) is a substrate binding site. Residues Ser67 and 124–130 (GSGLSSS) contribute to the ATP site. Positions 130 and 162 each coordinate Mg(2+). Asp174 (proton acceptor) is an active-site residue. Tyr224 is a substrate binding site.

It belongs to the GHMP kinase family. GalK subfamily.

The protein localises to the cytoplasm. The enzyme catalyses alpha-D-galactose + ATP = alpha-D-galactose 1-phosphate + ADP + H(+). Its pathway is carbohydrate metabolism; galactose metabolism. Catalyzes the transfer of the gamma-phosphate of ATP to D-galactose to form alpha-D-galactose-1-phosphate (Gal-1-P). The protein is Galactokinase of Streptococcus suis (strain 05ZYH33).